The following is a 236-amino-acid chain: OPEP-2 protein (236 aa).

The protein is OPEP-2 protein (OPEP-2) of Orgyia pseudotsugata (Douglas-fir tussock moth).